Reading from the N-terminus, the 164-residue chain is I-Kappa-B like protein F1 (164 aa).

ANK repeat units follow at residues His-57–Ala-89, Thr-94–Ala-124, and Gln-128–Asn-157.

It belongs to the polydnaviridae I-Kappa-B-like protein family.

Its function is as follows. Suppresses the host immune response through NF-kappa-B inactivation. Possesses ankyrin repeat domains required for NF-kappa-B binding but lacks the regulatory regions required for dissociation from NF-kappa-B and degradation. Therefore, prevents host NF-kappa-B release and subsequent activation. The chain is I-Kappa-B like protein F1 (F2) from Microplitis demolitor bracovirus (isolate Webb) (MdBV).